We begin with the raw amino-acid sequence, 209 residues long: Holliday junction branch migration complex subunit RuvA (209 aa).

A domain I region spans residues 1–70 (MINYLRGQAI…EEQPLLYGFG (70 aa)). The segment at 71-149 (TAPERELFRQ…AWRQLREATT (79 aa)) is domain II. The tract at residues 150-158 (TITAILPAA) is flexible linker. Residues 158–209 (AAILEDVQMTLLALGYSQEEIDRAMAVLSQDALFSKNTQPEDWIKGAINWLG) form a domain III region.

The protein belongs to the RuvA family. In terms of assembly, homotetramer. Forms an RuvA(8)-RuvB(12)-Holliday junction (HJ) complex. HJ DNA is sandwiched between 2 RuvA tetramers; dsDNA enters through RuvA and exits via RuvB. An RuvB hexamer assembles on each DNA strand where it exits the tetramer. Each RuvB hexamer is contacted by two RuvA subunits (via domain III) on 2 adjacent RuvB subunits; this complex drives branch migration. In the full resolvosome a probable DNA-RuvA(4)-RuvB(12)-RuvC(2) complex forms which resolves the HJ.

It is found in the cytoplasm. In terms of biological role, the RuvA-RuvB-RuvC complex processes Holliday junction (HJ) DNA during genetic recombination and DNA repair, while the RuvA-RuvB complex plays an important role in the rescue of blocked DNA replication forks via replication fork reversal (RFR). RuvA specifically binds to HJ cruciform DNA, conferring on it an open structure. The RuvB hexamer acts as an ATP-dependent pump, pulling dsDNA into and through the RuvAB complex. HJ branch migration allows RuvC to scan DNA until it finds its consensus sequence, where it cleaves and resolves the cruciform DNA. The polypeptide is Holliday junction branch migration complex subunit RuvA (Microcystis aeruginosa (strain NIES-843 / IAM M-2473)).